Reading from the N-terminus, the 85-residue chain is Coiled-coil-helix-coiled-coil-helix domain-containing protein 7 (85 aa).

Residues 13-55 enclose the CHCH domain; the sequence is SNPCLEETDASTKCMDDNRYEKDLCTPYFVKYKNCRKFWNGIM. Short sequence motifs (cx9C motif) lie at residues 16–26 and 37–47; these read CLEETDASTKC and CTPYFVKYKNC. Intrachain disulfides connect Cys-16/Cys-47 and Cys-26/Cys-37.

This sequence belongs to the CHCHD7 family.

It is found in the mitochondrion intermembrane space. In Xenopus tropicalis (Western clawed frog), this protein is Coiled-coil-helix-coiled-coil-helix domain-containing protein 7 (chchd7).